Consider the following 125-residue polypeptide: Small ribosomal subunit protein uS13 (125 aa).

Positions 94 to 125 (SLPVRGQRTRTNARTRKGKRKTVAGKKKAVKK) are disordered.

It belongs to the universal ribosomal protein uS13 family. As to quaternary structure, part of the 30S ribosomal subunit. Forms a loose heterodimer with protein S19. Forms two bridges to the 50S subunit in the 70S ribosome.

Its function is as follows. Located at the top of the head of the 30S subunit, it contacts several helices of the 16S rRNA. In the 70S ribosome it contacts the 23S rRNA (bridge B1a) and protein L5 of the 50S subunit (bridge B1b), connecting the 2 subunits; these bridges are implicated in subunit movement. Contacts the tRNAs in the A and P-sites. This Chlorobium chlorochromatii (strain CaD3) protein is Small ribosomal subunit protein uS13.